We begin with the raw amino-acid sequence, 98 residues long: NHHLNNNIEYSDDKENCLNESLEYNHQIKLNKQNQNSFRNRTAFTDYQLICLEREFSHIQYLSRIDRIHLAQNLNLTEKQVKIWFQNRRVRWRKRNLF.

Positions 37–96 form a DNA-binding region, homeobox; the sequence is SFRNRTAFTDYQLICLEREFSHIQYLSRIDRIHLAQNLNLTEKQVKIWFQNRRVRWRKRN.

Its subcellular location is the nucleus. The sequence is that of Homeobox protein SMOX-4 (SMOX-4) from Schistosoma mansoni (Blood fluke).